The primary structure comprises 178 residues: Aspartic proteinase nepenthesin-2 (178 aa).

Aspartate 98 is a catalytic residue.

The protein belongs to the peptidase A1 family.

It localises to the secreted. It carries out the reaction Similar to pepsin, but also cleaves on either side of Asp and at Lys-|-Arg.. With respect to regulation, inhibited by pepstatin and by diazoacetyl-D,L-norleucine methyl ester (DAN) in the presence of Cu(2+) ions. Its function is as follows. Extracellular proteinase found in the pitcher fluid of carnivorous plants. Digest prey for nitrogen uptake. This chain is Aspartic proteinase nepenthesin-2, found in Nepenthes distillatoria (Pitcher plant).